We begin with the raw amino-acid sequence, 169 residues long: Unfolded protein response-inducible protein 1 (169 aa).

Functionally, involved in the unfolded protein response (UPR), a transcriptional response which up-regulates genes that enable cells to cope with misfolded, endoplasmic reticulum-retained proteins. UPR is part of the endoplasmic reticulum quality control (ERQC) which prevents the exit of misfolded secretory and membrane proteins from the endoplasmic reticulum. This Saccharomyces cerevisiae (strain ATCC 204508 / S288c) (Baker's yeast) protein is Unfolded protein response-inducible protein 1 (ULI1).